Consider the following 234-residue polypeptide: Large ribosomal subunit protein uL1 (234 aa).

The protein belongs to the universal ribosomal protein uL1 family. In terms of assembly, part of the 50S ribosomal subunit.

In terms of biological role, binds directly to 23S rRNA. The L1 stalk is quite mobile in the ribosome, and is involved in E site tRNA release. Protein L1 is also a translational repressor protein, it controls the translation of the L11 operon by binding to its mRNA. This chain is Large ribosomal subunit protein uL1, found in Yersinia pseudotuberculosis serotype O:1b (strain IP 31758).